A 170-amino-acid polypeptide reads, in one-letter code: Large ribosomal subunit protein uL22c (170 aa).

This sequence belongs to the universal ribosomal protein uL22 family. In terms of assembly, part of the 50S ribosomal subunit.

It localises to the plastid. The protein resides in the chloroplast. Functionally, this protein binds specifically to 23S rRNA. In terms of biological role, the globular domain of the protein is located near the polypeptide exit tunnel on the outside of the subunit, while an extended beta-hairpin is found that lines the wall of the exit tunnel in the center of the 70S ribosome. This chain is Large ribosomal subunit protein uL22c (rpl22), found in Nandina domestica (Heavenly bamboo).